The primary structure comprises 438 residues: MAKPLVTIVGRPNVGKSTLFNKLAGKRVSIVEDTPGVTRDRIYAESEWVGKKFTIIDTGGIEPENNDIILTQMRRQAQIAIEMSDVIIFMVDGKQGLTDTDNEVAIMLRKSKKPIVLVVNKIDKNVEENNIYEFYNLGIGDPVSISSSQGLGIGDMLDEVVNKFKSEGEDEEEEEYIKIAFVGKPNVGKSSLTNRILGEERVIVSDIPGTTRDAIDSFLETDFGKLVLIDTAGLRRKSRIKEEIERYSAVRTMAAIERCDVCTLILDATEPISEQDERIIGYAHENNKAILVIVNKWDLIEKDDKTMENFKKNLEMKFSFMAYAPFLFISAKTGQRVHKVLSEIKKCYDNYSKRIATGVLNDVISNAVLMKEPPVVAFKRLKIFYVTQTDIKPPTFIFFVNNPELLHFSYRRYLENKLRQSFDFEGTGIKMIFKERKN.

2 EngA-type G domains span residues 4–168 (PLVT…KSEG) and 177–352 (IKIA…DNYS). GTP is bound by residues 10-17 (GRPNVGKS), 57-61 (DTGGI), 120-123 (NKID), 183-190 (GKPNVGKS), 230-234 (DTAGL), and 295-298 (NKWD). One can recognise a KH-like domain in the interval 353-437 (KRIATGVLND…GIKMIFKERK (85 aa)).

This sequence belongs to the TRAFAC class TrmE-Era-EngA-EngB-Septin-like GTPase superfamily. EngA (Der) GTPase family. In terms of assembly, associates with the 50S ribosomal subunit.

In terms of biological role, GTPase that plays an essential role in the late steps of ribosome biogenesis. In Clostridium acetobutylicum (strain ATCC 824 / DSM 792 / JCM 1419 / IAM 19013 / LMG 5710 / NBRC 13948 / NRRL B-527 / VKM B-1787 / 2291 / W), this protein is GTPase Der.